Reading from the N-terminus, the 989-residue chain is Frequency clock protein (989 aa).

3 disordered regions span residues 1-139, 208-290, and 331-445; these read MADS…PGFR, FAAS…VGTQ, and ISGR…PDRV. The segment covering 36–45 has biased composition (basic and acidic residues); the sequence is ENHRLARDTS. The segment covering 46 to 88 has biased composition (polar residues); that stretch reads SRVTSSSALGVTESQPQLKSSPTRRNSSGESEPTNWFNQSNRN. Residues 109–119 show a composition bias toward basic and acidic residues; it reads KETDSSNEESR. The span at 233–255 shows a compositional bias: low complexity; the sequence is HSSGVSLSKHDSSSSSRSRPVDS. Polar residues-rich tracts occupy residues 256–274 and 334–343; these read AYNSMSTGRSSHAPHSSGP and RNMQRNQSMP. Residues 377–386 show a composition bias toward basic and acidic residues; that stretch reads DNPRKNRSSK. A compositionally biased stretch (polar residues) spans 387-397; that stretch reads DNGSASNSGGD. Residues 402–418 show a composition bias toward gly residues; the sequence is GGTGTGSGDGSGSGGRT. Basic and acidic residues predominate over residues 433–444; sequence RPTRPRDLDPDR. Phosphothreonine is present on Thr-501. 2 positions are modified to phosphoserine: Ser-513 and Ser-519. Disordered regions lie at residues 524 to 642, 865 to 907, and 968 to 989; these read KIRW…QRRK, WDDG…TYMR, and SVATAGGAESGYSSSMEDVSSS. A Nuclear localization signal motif is present at residues 564–568; sequence RKKRK. The span at 598–615 shows a compositional bias: polar residues; that stretch reads RNSSSIETSLEESMSQGS. The segment covering 865 to 886 has biased composition (acidic residues); it reads WDDGDDLASDDEEVEEVEEDSY. The span at 978 to 989 shows a compositional bias: polar residues; the sequence is GYSSSMEDVSSS.

The protein belongs to the FRQ family. Post-translationally, progressive phosphorylation during the late circadian day and early night. Phosphorylation is also involved in regulating frq degradation. Phosphorylation by CKII may have at least three functions; it decreases the stability of frq, reduces the protein complex formation between frq and the white collar proteins, and is important for the closing of the Neurospora circadian negative feedback loop.

It localises to the nucleus. In terms of biological role, circadian clock component involved in the generation of biological rhythms, in particular in rhythm stability, period length, and temperature compensation. Oscillates in abundance with a daily peak early in the morning. Behaves as a negative element in circadian transcriptional loop. May bind to wc-2 protein. The complex frq-wc-2 may turn off the expression of frq. In Neurospora crassa (strain ATCC 24698 / 74-OR23-1A / CBS 708.71 / DSM 1257 / FGSC 987), this protein is Frequency clock protein (frq).